The following is a 277-amino-acid chain: Inositol monophosphatase 1 (277 aa).

The Mg(2+) site is built by glutamate 70, aspartate 90, isoleucine 92, and aspartate 93. A substrate-binding site is contributed by glutamate 70. 92–95 (IDGT) lines the substrate pocket. Threonine 168 carries the post-translational modification Phosphothreonine. Residues 194 to 196 (GTA), glutamate 213, and aspartate 220 each bind substrate. Position 220 (aspartate 220) interacts with Mg(2+).

This sequence belongs to the inositol monophosphatase superfamily. Homodimer. Requires Mg(2+) as cofactor.

It is found in the cytoplasm. The enzyme catalyses a myo-inositol phosphate + H2O = myo-inositol + phosphate. It carries out the reaction 1D-myo-inositol 1-phosphate + H2O = myo-inositol + phosphate. It catalyses the reaction 1D-myo-inositol 2-phosphate + H2O = myo-inositol + phosphate. The catalysed reaction is 1D-myo-inositol 3-phosphate + H2O = myo-inositol + phosphate. The enzyme catalyses 1D-myo-inositol 4-phosphate + H2O = myo-inositol + phosphate. It carries out the reaction 1D-myo-inositol 5-phosphate + H2O = myo-inositol + phosphate. It catalyses the reaction 1D-myo-inositol 6-phosphate + H2O = myo-inositol + phosphate. The catalysed reaction is scyllo-inositol 1-phosphate + H2O = scyllo-inositol + phosphate. The enzyme catalyses alpha-D-galactose 1-phosphate + H2O = D-galactose + phosphate. It carries out the reaction alpha-D-glucose 1-phosphate + H2O = D-glucose + phosphate. It catalyses the reaction D-glucose 6-phosphate + H2O = D-glucose + phosphate. The catalysed reaction is beta-D-fructose 1-phosphate + H2O = D-fructose + phosphate. The enzyme catalyses glycerol 2-phosphate + H2O = glycerol + phosphate. It carries out the reaction adenosine 2'-phosphate + H2O = adenosine + phosphate. It participates in polyol metabolism; myo-inositol biosynthesis; myo-inositol from D-glucose 6-phosphate: step 2/2. Its activity is regulated as follows. Activity with myo-inositol monophosphates and D-galactose 1-phosphate is inhibited by Li(+), Ca(2+) and Mn(2+), but also by Mg(2+) at concentrations above 3 mM. Its function is as follows. Phosphatase involved in the dephosphorylation of myo-inositol monophosphates to generate myo-inositol. Is also able to dephosphorylate scyllo-inositol-phosphate, myo-inositol 1,4-diphosphate, scyllo-inositol-1,3-diphosphate and scyllo-inositol-1,4-diphosphate. Also dephosphorylates in vitro other sugar-phosphates including D-galactose-1-phosphate, glucose-1-phosphate, glucose-6-phosphate, fructose-1-phosphate, beta-glycerophosphate and 2'-AMP. Responsible for the provision of inositol required for synthesis of phosphatidylinositols and polyphosphoinositides, and involved in maintaining normal brain function. Has been implicated as the pharmacological target for lithium (Li(+)) action in brain, which is used to treat bipolar affective disorder. Is equally active with 1D-myo-inositol 1-phosphate, 1D-myo-inositol 3-phosphate and D-galactose 1-phosphate. The polypeptide is Inositol monophosphatase 1 (Homo sapiens (Human)).